Consider the following 765-residue polypeptide: DNA ligase (765 aa).

The disordered stretch occupies residues M1–E34. NAD(+)-binding positions include D61–D65, S110–L111, and E144. K146 functions as the N6-AMP-lysine intermediate in the catalytic mechanism. NAD(+)-binding residues include R167, E204, K317, and K341. Residues C446, C449, C464, and C470 each contribute to the Zn(2+) site. Positions A687–G765 constitute a BRCT domain.

The protein belongs to the NAD-dependent DNA ligase family. LigA subfamily. It depends on Mg(2+) as a cofactor. Mn(2+) is required as a cofactor.

The enzyme catalyses NAD(+) + (deoxyribonucleotide)n-3'-hydroxyl + 5'-phospho-(deoxyribonucleotide)m = (deoxyribonucleotide)n+m + AMP + beta-nicotinamide D-nucleotide.. Functionally, DNA ligase that catalyzes the formation of phosphodiester linkages between 5'-phosphoryl and 3'-hydroxyl groups in double-stranded DNA using NAD as a coenzyme and as the energy source for the reaction. It is essential for DNA replication and repair of damaged DNA. The protein is DNA ligase of Paracoccus denitrificans (strain Pd 1222).